The primary structure comprises 67 residues: Probable tautomerase K2 (67 aa).

Pro-2 acts as the Proton acceptor; via imino nitrogen in catalysis.

It belongs to the 4-oxalocrotonate tautomerase family.

The protein is Probable tautomerase K2 of Dickeya dadantii (strain 3937) (Erwinia chrysanthemi (strain 3937)).